The chain runs to 561 residues: Acylcarnitine hydrolase (561 aa).

An N-terminal signal peptide occupies residues 1–26 (MTRNQLHNWLNAGFFGLLLLLIHVQG). A disulfide bridge links C97 with C125. S230 acts as the Acyl-ester intermediate in catalysis. C282 and C293 are oxidised to a cystine. Catalysis depends on charge relay system residues E347 and H459. A Prevents secretion from ER motif is present at residues 558-561 (HREL).

Belongs to the type-B carboxylesterase/lipase family. In terms of tissue distribution, detected in liver (at protein level).

It is found in the microsome. The protein localises to the endoplasmic reticulum. It catalyses the reaction an O-acyl-(R)-carnitine + H2O = (R)-carnitine + a fatty acid + H(+). The catalysed reaction is all-trans-retinyl hexadecanoate + H2O = all-trans-retinol + hexadecanoate + H(+). Its function is as follows. Hydrolase with high activity towards palmitoylcarnitine. Is also active with p-nitrophenylacetate and alpha-naphthylacetate. May also hydrolyze retinyl esters. The chain is Acylcarnitine hydrolase from Mus musculus (Mouse).